A 397-amino-acid chain; its full sequence is Kappa-carrageenase (397 aa).

Residues 1–25 (MKPISIVAFPIPAISMLLLSAVSQA) form the signal peptide. The region spanning 26-299 (ASMQPPIAKP…YVRTWVKVGN (274 aa)) is the GH16 domain. An intrachain disulfide couples cysteine 98 to cysteine 268. The Nucleophile role is filled by glutamate 163. The active site involves aspartate 165. Glutamate 168 functions as the Proton donor in the catalytic mechanism. Residues 316-387 (AVNSVQLSAA…TITVKTKNKG (72 aa)) form the BIG2 domain.

The protein belongs to the glycosyl hydrolase 16 family.

It localises to the periplasm. The enzyme catalyses Endohydrolysis of (1-&gt;4)-beta-D-linkages between D-galactose 4-sulfate and 3,6-anhydro-D-galactose in kappa-carrageenans.. This chain is Kappa-carrageenase (cgkA), found in Pseudoalteromonas carrageenovora (Alteromonas carrageenovora).